An 872-amino-acid polypeptide reads, in one-letter code: Armadillo repeat-containing protein 3 (872 aa).

ARM repeat units follow at residues 15-54, 57-96, 98-138, 140-179, 181-220, 222-262, 264-304, 306-345, 346-385, 388-427, 429-468, and 470-509; these read DVFDPLMIESKKAATVVLMLNSPEEEILAKACEAIYKFAL, EENKTTLLELGAVEPLTKLLTHEDKIVRRNATMIFGILAS, NDVK…NMSA, YTSKVQIFEHGGLEPLIRLLSSPDPDVKKNSMECIYNLVQ, FQCRAKLQELNAIPPILDLLKSEYPVIQLLALKTLGVIAN, KESR…NCLE, MDTM…KAAY, PENRKLFHEQEVEKCLVALLGSENDGTKIAASQAISAMCE, NSGSKDFFNNQGIPQLIQLLKSDNEEVREAAALALANLTT, PANANAAAEADGIDPLINLLSSKRDGAIANAATVLTNMAM, EPLRLNIQNHDIMHAIISPLRSANTVVQSKAALAVTATAC, and VEARTELRNSGGLEPLVELLRSKNDEVRKHASWAVMVCAG. 2 S-palmitoyl cysteine lipidation sites follow: C507 and C518. The interval 610–693 is disordered; that stretch reads VSPPSSMEDK…SKGKKEEEKV (84 aa). Residues 626–635 show a composition bias toward low complexity; it reads RSISSSSSLR. Positions 636-646 are enriched in basic residues; the sequence is RSSKEKNKKNS. Basic and acidic residues predominate over residues 675-693; that stretch reads ATKEKGWRKSKGKKEEEKV.

As to quaternary structure, homodimer. Interacts with PIK3C3, PIK3R4 and BECN1. Interacts (via ARM domains) with ATG14. Palmitoylation is important for its function in autophagy. Expressed in skeletal muscle, brain, lung, kidney, prostate and testis. As to expression, mainly expressed in skeletal muscle, liver, spleen and thymus. In terms of tissue distribution, expressed only in the testis among normal tissues but is expressed frequently in various cancer tissues and, particularly, in pancreatic, lung and endometrial cancers.

Functionally, essential for male fertility and sperm motility. During spermatogenesis, promotes the autophagic degradation of excessive ribosomes, providing energy resources for mitochondria and thus ensuring sperm flagellar motility. The polypeptide is Armadillo repeat-containing protein 3 (ARMC3) (Homo sapiens (Human)).